The chain runs to 902 residues: Calcium-activated chloride channel regulator 3A-1 (902 aa).

Positions 1 to 21 are cleaved as a signal peptide; sequence MVPGLQVLLFLTLHLLQNTES. Residues 45–199 form a metalloprotease domain region; that stretch reads DERLIPSIKE…RITGTNVVHN (155 aa). Residue asparagine 75 is glycosylated (N-linked (GlcNAc...) asparagine). Histidine 155 is a Zn(2+) binding site. Glutamate 156 is an active-site residue. Positions 159 and 166 each coordinate Zn(2+). One can recognise a VWFA domain in the interval 308 to 476; that stretch reads VVCLVLDKSG…NSLIDAFSRI (169 aa). 7 N-linked (GlcNAc...) asparagine glycosylation sites follow: asparagine 504, asparagine 515, asparagine 630, asparagine 687, asparagine 697, asparagine 809, and asparagine 814.

Belongs to the CLCR family. As to quaternary structure, part of a complex composed of complement component C3, CLCA1/CLCA3, A2ML1/OH and ALB/serum albumin. Post-translationally, glycosylated. The 130-kDa product is autoproteolytically processed by the metalloprotease domain and yields two subunits, a 90-kDa protein and a group of 32- to 38-kDa proteins. The cleavage is necessary for calcium-activated chloride channel (CaCC) activation activity. Highly expressed in skin and spleen, and at lower levels in kidney and liver. Also detected in lung and brain. Not detected in lung or brain. In lung, localizes to respiratory epithelia of the bronchi and trachea and the submucosal glands.

The protein resides in the cell membrane. Plays a role in modulating chloride current across the plasma membrane in a calcium-dependent manner. The chain is Calcium-activated chloride channel regulator 3A-1 from Mus musculus (Mouse).